Reading from the N-terminus, the 905-residue chain is Sun domain-containing protein 1 (905 aa).

Disordered regions lie at residues 1–21, 41–166, and 207–242; these read MSGDYKPNYQSSPSRKRLPLQ, NNTV…ILKQ, and QQQQQQQRNNNNNSNSSNNNNTSTTIKRNNQQIDNN. The Nuclear segment spans residues 1–290; sequence MSGDYKPNYQ…NNNNKVNFKQ (290 aa). Composition is skewed to low complexity over residues 41-67 and 75-101; these read NNTVNNNSSNNSNNHLLHNSNPNSSYL and SNQINIRNNSNSNSNTNNITSKKASSS. Positions 107–116 are enriched in basic and acidic residues; it reads KVDHNSHNNN. Residues 117–126 show a composition bias toward acidic residues; sequence DDDDIEDDVD. Over residues 129 to 146 the composition is skewed to polar residues; it reads YSTNNASSNILHNRFSNS. The stretch at 170–221 forms a coiled coil; the sequence is LYNHLNNQIQQQQQQQQQQQQQQQQQQQQQQQQQQQQQQQQQQQRNNNNNSN. Over residues 207-227 the composition is skewed to low complexity; that stretch reads QQQQQQQRNNNNNSNSSNNNN. A helical transmembrane segment spans residues 291–311; the sequence is AIWIFIFSVLFIGCLLGLFST. The Perinuclear space segment spans residues 312-905; that stretch reads NFYGIHIYFP…IEKQQQSDEL (594 aa). 2 coiled-coil regions span residues 359-456 and 504-609; these read KKNE…QLIQ and REFN…TQQF. The SUN domain occupies 662 to 860; it reads GASIEYNALH…YRFRVHGYQI (199 aa). Residues 864-901 adopt a coiled-coil conformation; that stretch reads EQEQIQIIQEEQSFKQEEINQQQIEQIEQIEQIEKQQQ.

In terms of assembly, homodimer and homooligomer.

It localises to the nucleus membrane. Its function is as follows. May have an important role in defining the spacing of the nuclear envelope lumen. Essential for centrosome attachment to the nucleus, maintenance of correct ploidy, proper mitosis, association of the centromere cluster with the centrosome and the maintenance of genome stability. Requires direct chromatin binding for inner nuclear membrane targeting. The chain is Sun domain-containing protein 1 (sun1) from Dictyostelium discoideum (Social amoeba).